Here is a 57-residue protein sequence, read N- to C-terminus: uncharacterized protein (57 aa).

A disordered region spans residues Met1–Tyr57. Over residues Pro10–Pro22 the composition is skewed to basic residues. A compositionally biased stretch (low complexity) spans Arg23–Ser34. Positions Pro35–Arg51 are enriched in basic residues.

This is an uncharacterized protein from Acheta domesticus (House cricket).